Reading from the N-terminus, the 458-residue chain is Brassinosteroid-related acyltransferase 1 (458 aa).

His-164 serves as the catalytic Proton acceptor.

This sequence belongs to the plant acyltransferase family. As to expression, highly expressed in young tissues and vascular bundles. Mostly expressed in young leaves, primary roots, flowers (including petals and sepals), and siliques.

It localises to the endoplasmic reticulum. The protein localises to the nucleus. Its pathway is plant hormone biosynthesis; brassinosteroid biosynthesis. Its function is as follows. Brassinosteroids (BR) acyltransferase with acyl-CoA ligase activity toward brassinolide (BL), castasterone (CS), typhasterol (TY), 6-deoxotyphasterol (6-deoxoTY), and 6-deoxocastasterone (6-deoxoCS) and thus converts them to corresponding lauroyl esters. Regulates BR homeostasis and promotes BR-mediated cell growth regulation. Involved in vascular bundle development. This Arabidopsis thaliana (Mouse-ear cress) protein is Brassinosteroid-related acyltransferase 1.